The primary structure comprises 142 residues: Ribosome-binding factor A (142 aa).

A disordered region spans residues 118 to 142; the sequence is DEAKQQEHGTVENAKQDGDKAEDDK.

Belongs to the RbfA family. Monomer. Binds 30S ribosomal subunits, but not 50S ribosomal subunits or 70S ribosomes.

The protein localises to the cytoplasm. One of several proteins that assist in the late maturation steps of the functional core of the 30S ribosomal subunit. Associates with free 30S ribosomal subunits (but not with 30S subunits that are part of 70S ribosomes or polysomes). Required for efficient processing of 16S rRNA. May interact with the 5'-terminal helix region of 16S rRNA. In Shewanella piezotolerans (strain WP3 / JCM 13877), this protein is Ribosome-binding factor A.